Reading from the N-terminus, the 226-residue chain is ATP-dependent dethiobiotin synthetase BioD (226 aa).

14-19 contacts ATP; the sequence is GIGKTF. Threonine 18 is a Mg(2+) binding site. The active site involves lysine 39. Residue serine 43 participates in substrate binding. ATP-binding positions include aspartate 56, 117 to 120, 177 to 178, 206 to 208, and asparagine 213; these read EGVG, NT, and PHI. Mg(2+) contacts are provided by aspartate 56 and glutamate 117.

Belongs to the dethiobiotin synthetase family. Homodimer. Requires Mg(2+) as cofactor.

It localises to the cytoplasm. It catalyses the reaction (7R,8S)-7,8-diammoniononanoate + CO2 + ATP = (4R,5S)-dethiobiotin + ADP + phosphate + 3 H(+). It functions in the pathway cofactor biosynthesis; biotin biosynthesis; biotin from 7,8-diaminononanoate: step 1/2. Its function is as follows. Catalyzes a mechanistically unusual reaction, the ATP-dependent insertion of CO2 between the N7 and N8 nitrogen atoms of 7,8-diaminopelargonic acid (DAPA, also called 7,8-diammoniononanoate) to form a ureido ring. The protein is ATP-dependent dethiobiotin synthetase BioD of Xylella fastidiosa (strain M12).